The following is a 1437-amino-acid chain: Protein SUPPRESSOR OF npr1-1, CONSTITUTIVE 1 (1437 aa).

M1 is subject to N-acetylmethionine. Positions R19–T182 constitute a TIR domain. Residue R28 to R33 participates in NAD(+) binding. E93 is an active-site residue. LRR repeat units follow at residues M554–P576, L577–A598, Y600–L621, G622–I645, L647–A668, K670–L691, E692–C715, L781–T805, L807–L828, H829–L851, S852–I875, W877–L895, R897–L918, S919–S939, E940–T962, L964–L985, S1009–S1029, T1030–L1052, R1054–L1075, S1076–S1096, T1097–R1121, T1123–L1143, and L1161–Y1185.

The protein belongs to the disease resistance TIR-NB-LRR family. As to quaternary structure, homodimer. Interacts (via TIR domain) with TPR1. Interacts with EDS1. Interacts with SRFR1. Interacts with HSP90-3. Binds to MORC1/CRT1. Interacts with TRAF1B. Met-1 is specifically acetylated by N-terminal acetyltransferase complex A (NatA). The NatA-mediated acetylation serves as a degradation signal. In terms of processing, met-1 is specifically acetylated by N-terminal acetyltransferase complex B (NatB). The NatB-mediated acetylation stabilizes SNC1. As to expression, expressed in guard cells and epidermal cells, but not detected in mesophyll cells.

It localises to the cytoplasm. Its subcellular location is the microsome. The protein localises to the nucleus. It catalyses the reaction NAD(+) + H2O = ADP-D-ribose + nicotinamide + H(+). Disease resistance protein of the TIR-NB-LRR-type. Part of the RPP5 locus that contains a cluster of several paralogous disease resistance (R) genes. Resistance proteins guard the plant against pathogens that contain an appropriate avirulence protein via an indirect interaction with this avirulence protein. That triggers a defense system including the hypersensitive response, which restricts the pathogen growth. Probably acts as a NAD(+) hydrolase (NADase): in response to activation, catalyzes cleavage of NAD(+) into ADP-D-ribose (ADPR) and nicotinamide; NAD(+) cleavage triggering a defense system that promotes cell death. Expression regulated by MOS1 at chromatin level. Nuclear localization of SNC1 is essential for its activity. ABA deficiency can rescue high-temperature inhibition of SNC1-mediated defense responses. This Arabidopsis thaliana (Mouse-ear cress) protein is Protein SUPPRESSOR OF npr1-1, CONSTITUTIVE 1.